Reading from the N-terminus, the 276-residue chain is Secretagogin (276 aa).

6 consecutive EF-hand domains span residues 12 to 47 (LDAA…MLTK), 71 to 93 (DVSK…EDEN), 105 to 140 (DSSV…LFLH), 149 to 184 (KLEE…QENF), 197 to 232 (ERKR…MMEL), and 240 to 276 (VDLD…KINP). Residues D71, S73, D75, C77, E82, D118, D120, S122, E129, D162, N164, D166, R168, D173, D210, S212, T214, E221, D254, N256, D258, K260, and E265 each coordinate Ca(2+).

The protein resides in the cytoplasm. It localises to the secreted. Its subcellular location is the cytoplasmic vesicle. The protein localises to the secretory vesicle membrane. The protein is Secretagogin (SCGN) of Bos taurus (Bovine).